The primary structure comprises 248 residues: Pulmonary surfactant-associated protein A1 (248 aa).

The N-terminal stretch at 1-20 is a signal peptide; it reads MWLCPLALNLILMAASGAVC. In terms of domain architecture, Collagen-like spans 28–100; sequence GSPGIPGTPG…PGERGPPGLP (73 aa). 4-hydroxyproline is present on residues Pro-30, Pro-33, Pro-36, Pro-42, Pro-54, Pro-57, Pro-63, Pro-67, and Pro-70. The disordered stretch occupies residues 31 to 101; it reads GIPGTPGSHG…GERGPPGLPA (71 aa). Basic and acidic residues predominate over residues 42-51; it reads PGRDGRDGLK. Residues 54-70 are compositionally biased toward pro residues; it reads PGPPGPMGPPGEMPCPP. The C-type lectin domain occupies 132 to 248; it reads MTVGEKVFSS…LYSRLTICEF (117 aa). 2 disulfides stabilise this stretch: Cys-155–Cys-246 and Cys-224–Cys-238. An N-linked (GlcNAc...) asparagine glycan is attached at Asn-207.

It belongs to the SFTPA family. In terms of assembly, oligomeric complex of 6 set of homotrimers. Interacts with CD93. As to quaternary structure, (Microbial infection) Binds M.bovis cell surface protein Apa via its glycosylated sites; probably also recognizes other bacterial moieties. (Microbial infection) Binds to the S.aureus extracellular adherence protein, Eap, thereby enhancing phagocytosis and killing of S.aureus by alveolar macrophages. In terms of assembly, (Microbial infection) Interacts with M.pneumoniae CARDS toxin; CARDS probably uses this protein as a receptor. N-acetylated.

The protein resides in the secreted. The protein localises to the extracellular space. It localises to the extracellular matrix. Its subcellular location is the surface film. Its function is as follows. In presence of calcium ions, it binds to surfactant phospholipids and contributes to lower the surface tension at the air-liquid interface in the alveoli of the mammalian lung and is essential for normal respiration. Enhances the expression of MYO18A/SP-R210 on alveolar macrophages. (Microbial infection) Recognition of M.tuberculosis by dendritic cells may occur partially via this molecule. Can recognize, bind, and opsonize pathogens to enhance their elimination by alveolar macrophages. In terms of biological role, (Microbial infection) Binds M.pneumoniae CARDS toxin, serves as one receptor for this pathogen. When SFTPA1 is down-regulated by siRNA, less toxin binds to human cells and less vacuolization (a symptom of M.pneumoniae infection) is seen. This Homo sapiens (Human) protein is Pulmonary surfactant-associated protein A1 (SFTPA1).